The following is a 250-amino-acid chain: NAD(P)H-hydrate epimerase (250 aa).

A YjeF N-terminal domain is found at 14 to 238 (AAALDVELMS…SIAEKYGIQK (225 aa)). A (6S)-NADPHX-binding site is contributed by 74–78 (NNGGD). K(+)-binding residues include Asn75 and Asp143. (6S)-NADPHX-binding positions include 147–154 (GFSFHGTA), Tyr159, and Asp180. Ser183 is a K(+) binding site.

The protein belongs to the NnrE/AIBP family. The cofactor is K(+).

It catalyses the reaction (6R)-NADHX = (6S)-NADHX. The enzyme catalyses (6R)-NADPHX = (6S)-NADPHX. Its function is as follows. Catalyzes the epimerization of the S- and R-forms of NAD(P)HX, a damaged form of NAD(P)H that is a result of enzymatic or heat-dependent hydration. This is a prerequisite for the S-specific NAD(P)H-hydrate dehydratase to allow the repair of both epimers of NAD(P)HX. This Thalassiosira pseudonana (Marine diatom) protein is NAD(P)H-hydrate epimerase.